Here is a 270-residue protein sequence, read N- to C-terminus: DNA repair protein RecO (270 aa).

The protein belongs to the RecO family.

Its function is as follows. Involved in DNA repair and RecF pathway recombination. This chain is DNA repair protein RecO, found in Synechococcus sp. (strain WH7803).